A 105-amino-acid polypeptide reads, in one-letter code: Large ribosomal subunit protein uL24 (105 aa).

Belongs to the universal ribosomal protein uL24 family. In terms of assembly, part of the 50S ribosomal subunit.

Its function is as follows. One of two assembly initiator proteins, it binds directly to the 5'-end of the 23S rRNA, where it nucleates assembly of the 50S subunit. In terms of biological role, one of the proteins that surrounds the polypeptide exit tunnel on the outside of the subunit. This Buchnera aphidicola subsp. Cinara cedri (strain Cc) protein is Large ribosomal subunit protein uL24.